A 176-amino-acid polypeptide reads, in one-letter code: Tubulin polymerization-promoting protein family member 3 (176 aa).

Alanine 2 bears the N-acetylalanine mark.

It belongs to the TPPP family.

The protein resides in the cytoplasm. It is found in the cytoskeleton. Regulator of microtubule dynamic that has microtubule bundling activity. Required for embryo implantation; possibly by regulating beta-catenin. Also required for decidualization via regulation of beta-catenin. The chain is Tubulin polymerization-promoting protein family member 3 (TPPP3) from Bos taurus (Bovine).